A 385-amino-acid chain; its full sequence is MSWQQRVDDALTARRATDTLRRRYVVSQGAGRWLVANGRQYLNFSSNDYLGLSQHPQIIRAWQQAAIRFGVGSGGSGHISGYSVAHQALEEELAQWLGYPRALLFISGFAANQAVITALMKKNDRIVADRLSHASLLEAANLSPAQLRRFIHNDTQHLSRLLQSPCVGQQLVVTEGVYSMDGDSAPLAEIQHIARRHHAWLLVDDAHGIGVTGDEGRGTCWQRGVKPELLVVTFGKGFGVSGAAVLCSESVADYLLQFARHLVYSTSMPPAQAQALSASLAVIRSDEGGERREKLAALVQRFRAGVNASRFTLLNAHSAIQPLIVGDNSRALRLAEALRQQGCWAMAIRPPTVPVGTARLRLTLTQAHEACDIDRLLEVLHGTGE.

Substrate is bound at residue Arg-21. 108–109 (GF) is a pyridoxal 5'-phosphate binding site. His-133 serves as a coordination point for substrate. Residues Ser-179, His-207, and Thr-233 each coordinate pyridoxal 5'-phosphate. An N6-(pyridoxal phosphate)lysine modification is found at Lys-236. Residue Thr-352 participates in substrate binding.

The protein belongs to the class-II pyridoxal-phosphate-dependent aminotransferase family. BioF subfamily. As to quaternary structure, homodimer. Pyridoxal 5'-phosphate is required as a cofactor.

It catalyses the reaction 6-carboxyhexanoyl-[ACP] + L-alanine + H(+) = (8S)-8-amino-7-oxononanoate + holo-[ACP] + CO2. It functions in the pathway cofactor biosynthesis; biotin biosynthesis. In terms of biological role, catalyzes the decarboxylative condensation of pimeloyl-[acyl-carrier protein] and L-alanine to produce 8-amino-7-oxononanoate (AON), [acyl-carrier protein], and carbon dioxide. In Salmonella agona (strain SL483), this protein is 8-amino-7-oxononanoate synthase.